Reading from the N-terminus, the 864-residue chain is Alanine--tRNA ligase (864 aa).

Zn(2+)-binding residues include His-534, His-538, Cys-639, and His-643.

Belongs to the class-II aminoacyl-tRNA synthetase family. Requires Zn(2+) as cofactor.

The protein resides in the cytoplasm. The catalysed reaction is tRNA(Ala) + L-alanine + ATP = L-alanyl-tRNA(Ala) + AMP + diphosphate. Functionally, catalyzes the attachment of alanine to tRNA(Ala) in a two-step reaction: alanine is first activated by ATP to form Ala-AMP and then transferred to the acceptor end of tRNA(Ala). Also edits incorrectly charged Ser-tRNA(Ala) and Gly-tRNA(Ala) via its editing domain. This is Alanine--tRNA ligase from Aster yellows witches'-broom phytoplasma (strain AYWB).